A 185-amino-acid chain; its full sequence is MSIEIITGPMYSGKTTELIRRITRYKLCKKNCVIISHSIDNRHDDDNILINHDGFKISHDDFIKTNILINKIKIFDKYEIIGIDECQFFDSNDLIIFCDTLANNGKKIIVAGLNSDFNKNPFKSIIKLIPISEKITKLQSICNFCYNDATFTMKKFNKDIIIEIGGSDLYIPVCRICYNENNTIN.

8–15 (GPMYSGKT) provides a ligand contact to ATP. The Proton acceptor role is filled by Glu-85. Phe-117 is a binding site for substrate. Zn(2+) contacts are provided by Cys-142 and Cys-145. 161-165 (IIEIG) lines the substrate pocket. Zn(2+)-binding residues include Cys-174 and Cys-177.

The protein belongs to the thymidine kinase family.

The enzyme catalyses thymidine + ATP = dTMP + ADP + H(+). In Choristoneura fumiferana entomopoxvirus (CfEPV), this protein is Thymidine kinase (TK).